A 191-amino-acid chain; its full sequence is MKIGVIAMQGAFREHEQTLARLGVETLRIRRPEQLSQIDGIIIPGGESTTIGKLLGDFNLMEPLRERILSGLPVFGTCAGMILLAKEIENSNQPRIGTMDIKVARNAFGRQVDSFEVDLEIPEVGQEPVRAVFIRAPYILEVKPSVQVLAKVDDKIVMARQDNMLVSAFHPELTDDLRIHRYFIEKVCKGL.

46–48 is a binding site for L-glutamine; it reads GES. Residue Cys-78 is the Nucleophile of the active site. L-glutamine contacts are provided by residues Arg-105 and 134–135; that span reads IR. Residues His-170 and Glu-172 each act as charge relay system in the active site.

It belongs to the glutaminase PdxT/SNO family. In terms of assembly, in the presence of PdxS, forms a dodecamer of heterodimers. Only shows activity in the heterodimer.

The catalysed reaction is aldehydo-D-ribose 5-phosphate + D-glyceraldehyde 3-phosphate + L-glutamine = pyridoxal 5'-phosphate + L-glutamate + phosphate + 3 H2O + H(+). It catalyses the reaction L-glutamine + H2O = L-glutamate + NH4(+). Its pathway is cofactor biosynthesis; pyridoxal 5'-phosphate biosynthesis. Its function is as follows. Catalyzes the hydrolysis of glutamine to glutamate and ammonia as part of the biosynthesis of pyridoxal 5'-phosphate. The resulting ammonia molecule is channeled to the active site of PdxS. This is Pyridoxal 5'-phosphate synthase subunit PdxT from Carboxydothermus hydrogenoformans (strain ATCC BAA-161 / DSM 6008 / Z-2901).